A 96-amino-acid chain; its full sequence is Acylphosphatase (96 aa).

The 93-residue stretch at 4–96 folds into the Acylphosphatase-like domain; sequence RCEFLIFGKV…ESLNDFEILR (93 aa). Active-site residues include Arg-19 and Asn-42.

It belongs to the acylphosphatase family.

The enzyme catalyses an acyl phosphate + H2O = a carboxylate + phosphate + H(+). The sequence is that of Acylphosphatase (acyP) from Helicobacter hepaticus (strain ATCC 51449 / 3B1).